The primary structure comprises 443 residues: Putative rhamnogalacturonase D (443 aa).

An N-terminal signal peptide occupies residues 1-16 (MLVTSLIALLPAIAAA). A disulfide bridge connects residues Cys37 and Cys63. N-linked (GlcNAc...) asparagine glycans are attached at residues Asn47, Asn103, Asn124, and Asn152. Asp215 (proton donor) is an active-site residue. Cys217 and Cys234 form a disulfide bridge. 5 N-linked (GlcNAc...) asparagine glycosylation sites follow: Asn235, Asn250, Asn263, Asn276, and Asn281. Cys338 and Cys344 are oxidised to a cystine. Asn346 is a glycosylation site (N-linked (GlcNAc...) asparagine). Cysteines 366 and 375 form a disulfide. The N-linked (GlcNAc...) asparagine glycan is linked to Asn380.

Belongs to the glycosyl hydrolase 28 family.

Its subcellular location is the secreted. In terms of biological role, pectinolytic enzymes consist of four classes of enzymes: pectine lyase, polygalacturonase, pectin methylesterase and rhamnogalacturonase. Hydrolyzes alpha-D-galacturonopyranosyl-(1,2)-alpha-L-rhamnopyranosyl linkages in the backbone of the hairy regions of pectins. The chain is Putative rhamnogalacturonase D (rhgD) from Aspergillus niger (strain ATCC MYA-4892 / CBS 513.88 / FGSC A1513).